A 326-amino-acid polypeptide reads, in one-letter code: MVLTDLYGRPVLSLRIQLNTTCNFNCFFCHMEGTEISGEALKPEEIERVVKIAHKFGVNKIKLTGGEPTLRRDLIDIVKRIRKYITGNISMTTNGVMLPILAYELKKAGLDRVNISMHAFDEDTFQAITGVNSRDRIIKAIDAANEAGLTPVKINFVVLRDLNVDQIPDMIELAAEKHAILQLIEYETTREGESSKEYLKYHMPLDSLEKEIADKALSIERNELHNRPRYIIRTQAGEVKVEFVKPQRNPDFCAHCTRLRITSEGEFKTCLMRSDTNVKFKGINDEKTISELFRQAVLRREPYWRPGDEVRQNEVLAKSIIQNKRK.

The 230-residue stretch at 6-235 (LYGRPVLSLR…NRPRYIIRTQ (230 aa)) folds into the Radical SAM core domain. Arg15 is a binding site for GTP. The [4Fe-4S] cluster site is built by Cys22, Cys26, and Cys29. GTP is bound at residue Lys62. Residue Gly66 participates in S-adenosyl-L-methionine binding. Thr92 contacts GTP. An S-adenosyl-L-methionine-binding site is contributed by Ser116. A GTP-binding site is contributed by Lys153. 2 residues coordinate [4Fe-4S] cluster: Cys253 and Cys256. 258–260 (RLR) contributes to the GTP binding site. Cys270 is a binding site for [4Fe-4S] cluster.

This sequence belongs to the radical SAM superfamily. MoaA family. [4Fe-4S] cluster is required as a cofactor.

It catalyses the reaction GTP + AH2 + S-adenosyl-L-methionine = (8S)-3',8-cyclo-7,8-dihydroguanosine 5'-triphosphate + 5'-deoxyadenosine + L-methionine + A + H(+). It functions in the pathway cofactor biosynthesis; molybdopterin biosynthesis. Functionally, catalyzes the cyclization of GTP to (8S)-3',8-cyclo-7,8-dihydroguanosine 5'-triphosphate. This Thermoplasma volcanium (strain ATCC 51530 / DSM 4299 / JCM 9571 / NBRC 15438 / GSS1) protein is Probable GTP 3',8-cyclase.